A 348-amino-acid chain; its full sequence is Protein RecA (348 aa).

Residue 71 to 78 (GVESSGKT) participates in ATP binding.

It belongs to the RecA family.

It is found in the cytoplasm. In terms of biological role, can catalyze the hydrolysis of ATP in the presence of single-stranded DNA, the ATP-dependent uptake of single-stranded DNA by duplex DNA, and the ATP-dependent hybridization of homologous single-stranded DNAs. It interacts with LexA causing its activation and leading to its autocatalytic cleavage. This Aquifex pyrophilus protein is Protein RecA.